Reading from the N-terminus, the 366-residue chain is IgG receptor FcRn large subunit p51 (366 aa).

A signal peptide spans 1–22 (MGMSQPGVLLSLLLVLLPQTWG). Residues 23–111 (AEPRLPLMYH…RTLENQINGT (89 aa)) form an alpha-1 region. At 23–298 (AEPRLPLMYH…VDLDSPARSS (276 aa)) the chain is on the extracellular side. N-linked (GlcNAc...) asparagine glycans are attached at residues Asn-109, Asn-126, Asn-150, and Asn-247. The tract at residues 112–201 (FTLQGLLGCE…ERGRQNLEWK (90 aa)) is alpha-2. 2 disulfide bridges follow: Cys-120-Cys-183 and Cys-222-Cys-276. Residues 202-291 (EPPSMRLKAR…GLAQPLTVDL (90 aa)) form an alpha-3 region. In terms of domain architecture, Ig-like C1-type spans 203–290 (PPSMRLKARP…EGLAQPLTVD (88 aa)). The interval 293 to 298 (SPARSS) is connecting peptide. The chain crosses the membrane as a helical span at residues 299 to 322 (VPVVGIILGLLLVVVAIAGGVLLW). Over 323-366 (NRMRSGLPAPWLSLSGDDSGDLLPGGNLPPEAEPQGVNAFPATS) the chain is Cytoplasmic. Ser-335 is modified (phosphoserine). A disordered region spans residues 344–366 (LLPGGNLPPEAEPQGVNAFPATS).

It belongs to the immunoglobulin superfamily. In terms of assembly, fcRn complex consists of two subunits: p51, and p14 which is equivalent to beta-2-microglobulin. It forms an MHC class I-like heterodimer. Interacts with albumin/ALB; this interaction regulates ALB homeostasis. Intestinal epithelium.

The protein localises to the cell membrane. It is found in the endosome membrane. Its function is as follows. Cell surface receptor that transfers passive humoral immunity from the mother to the newborn. Binds to the Fc region of monomeric immunoglobulin gamma and mediates its selective uptake from milk. IgG in the milk is bound at the apical surface of the intestinal epithelium. The resultant FcRn-IgG complexes are transcytosed across the intestinal epithelium and IgG is released from FcRn into blood or tissue fluids. Throughout life, contributes to effective humoral immunity by recycling IgG and extending its half-life in the circulation. Mechanistically, monomeric IgG binding to FcRn in acidic endosomes of endothelial and hematopoietic cells recycles IgG to the cell surface where it is released into the circulation. In addition of IgG, regulates homeostasis of the other most abundant circulating protein albumin/ALB. This chain is IgG receptor FcRn large subunit p51 (Fcgrt), found in Rattus norvegicus (Rat).